The primary structure comprises 627 residues: Serine/threonine-protein phosphatase 2A 56 kDa regulatory subunit delta 2 isoform (627 aa).

The segment at M1–Y37 is disordered.

This sequence belongs to the phosphatase 2A regulatory subunit B family. In terms of assembly, PP2A consists of a common heterodimeric core enzyme, composed of a 36 kDa catalytic subunit (subunit C) and a 65 kDa constant regulatory subunit (PR65 or subunit A), that associates with a variety of regulatory subunits. Proteins that associate with the core dimer include three families of regulatory subunits B (the R2/B/PR55/B55, R3/B''/PR72/PR130/PR59 and R5/B'/B56 families), the 48 kDa variable regulatory subunit, viral proteins, and cell signaling molecules.

Its subcellular location is the cytoplasm. It is found in the cell tip. Functionally, the B regulatory subunit might modulate substrate selectivity and catalytic activity, and might also direct the localization of the catalytic enzyme to a particular subcellular compartment. Has a role in cell shape control and septum formation. This chain is Serine/threonine-protein phosphatase 2A 56 kDa regulatory subunit delta 2 isoform (par2), found in Schizosaccharomyces pombe (strain 972 / ATCC 24843) (Fission yeast).